The chain runs to 105 residues: Prothymosin alpha-A (105 aa).

A compositionally biased stretch (basic and acidic residues) spans 1–30 (MADTKVDTSKEVSAKDLKEKKQVEEAENGK). The segment at 1-105 (MADTKVDTSK…VDPKKQKTDV (105 aa)) is disordered. Acidic residues-rich tracts occupy residues 39–78 (ENEENGDQENEVDEEDDDVAEEDEEDDGEGDDDDEDEEAE) and 87–96 (EDDDDDEDDV).

The protein belongs to the pro/parathymosin family. At the 20-somite stage (18 hpf), expressed on the dorsal side of the embryo in the developing central and peripheral nervous system (CNS and PNS), in the tail bud and the pronephric ducts. In the PNS, expressed in the otic vesicle, trigeminal ganglion and the anterior lateral line placode. Localized throughout the hindbrain, with highest expression in rhombomeres 3 and 4. In the head, expressed in the olfactory placode and in the diencephalic region. At the end of the segmentation period (20 hpf), expression begins in the newly forming endodermal pouches, and weakly in the pharyngeal arch precursor cells. During the early pharyngula period, expressed in the pectoral fin bud, the developing retina, and still present in the central nervous system and endodermal pouches. In the tail, expressed in the spinal cord and posterior lateral line precursors. Weakly expressed in the pronephric ducts, only in the corpuscles of Stanius. At 48 hpf, still expressed in the retina and brain, where expression is almost uniform. At this stage, expression is decreased in the spinal cord and is absent from the lateral line cells and pronephric ducts, but appears in the intestine and continues in the pharyngeal arches. In 72 hpf embryos, expression in the brain remains uniform but is restricted to amacrine cells in the retina. In the pharyngeal arches, expression continues to be limited to the ectodermal and endodermal covering cells.

The protein localises to the nucleus. This is Prothymosin alpha-A (ptmaa) from Danio rerio (Zebrafish).